The sequence spans 159 residues: Dihydrofolate reductase (159 aa).

One can recognise a DHFR domain in the interval 2-157; sequence TLSILVAHDL…IPHTFLHLIR (156 aa). Position 6 to 8 (6 to 8) interacts with substrate; it reads LVA. Residues 7–8 and 15–20 each bind NADP(+); these read VA and IGFENQ. Residue aspartate 28 participates in substrate binding. 44 to 47 is an NADP(+) binding site; it reads GRKT. Residue arginine 58 coordinates substrate. NADP(+) contacts are provided by residues 63–66 and 93–98; these read LTSD and FGGQTL. Residue threonine 112 participates in substrate binding.

The protein belongs to the dihydrofolate reductase family.

The enzyme catalyses (6S)-5,6,7,8-tetrahydrofolate + NADP(+) = 7,8-dihydrofolate + NADPH + H(+). Its pathway is cofactor biosynthesis; tetrahydrofolate biosynthesis; 5,6,7,8-tetrahydrofolate from 7,8-dihydrofolate: step 1/1. Key enzyme in folate metabolism. Catalyzes an essential reaction for de novo glycine and purine synthesis, and for DNA precursor synthesis. This is Dihydrofolate reductase (folA) from Staphylococcus aureus (strain COL).